The chain runs to 157 residues: S-ribosylhomocysteine lyase (157 aa).

3 residues coordinate Fe cation: His54, His58, and Cys126.

The protein belongs to the LuxS family. As to quaternary structure, homodimer. Fe cation is required as a cofactor.

The enzyme catalyses S-(5-deoxy-D-ribos-5-yl)-L-homocysteine = (S)-4,5-dihydroxypentane-2,3-dione + L-homocysteine. Involved in the synthesis of autoinducer 2 (AI-2) which is secreted by bacteria and is used to communicate both the cell density and the metabolic potential of the environment. The regulation of gene expression in response to changes in cell density is called quorum sensing. Catalyzes the transformation of S-ribosylhomocysteine (RHC) to homocysteine (HC) and 4,5-dihydroxy-2,3-pentadione (DPD). In Bacillus pumilus (strain SAFR-032), this protein is S-ribosylhomocysteine lyase.